The sequence spans 336 residues: IgLON family member 5 (336 aa).

The first 30 residues, 1–30 (MPPPAPGARLRLLAAAALAGLAVISRGLLS), serve as a signal peptide directing secretion. Ig-like C2-type domains lie at 33–122 (LEFS…QPYT), 132–213 (PARI…VLVT), and 218–307 (PTIT…MRLL). Asn-41, Asn-49, Asn-67, and Asn-137 each carry an N-linked (GlcNAc...) asparagine glycan. Cys-54 and Cys-112 are disulfide-bonded. Disulfide bonds link Cys-154–Cys-195 and Cys-238–Cys-291. Asn-288 carries an N-linked (GlcNAc...) asparagine glycan.

It belongs to the immunoglobulin superfamily. IgLON family.

It is found in the secreted. The chain is IgLON family member 5 (Iglon5) from Mus musculus (Mouse).